Here is a 164-residue protein sequence, read N- to C-terminus: UPF0304 protein YE1336 (164 aa).

Belongs to the UPF0304 family.

This Yersinia enterocolitica serotype O:8 / biotype 1B (strain NCTC 13174 / 8081) protein is UPF0304 protein YE1336.